We begin with the raw amino-acid sequence, 308 residues long: UDP-N-acetylenolpyruvoylglucosamine reductase (308 aa).

The FAD-binding PCMH-type domain occupies 22-185; it reads RVGGPADWLF…VEAAFRADAG (164 aa). The active site involves Arg165. Over residues 197-211 the composition is skewed to basic and acidic residues; it reads QIARRDSSQPTRDRS. Residues 197-228 are disordered; it reads QIARRDSSQPTRDRSAGSTFRNPAGFSSTGRA. The span at 212 to 226 shows a compositional bias: polar residues; it reads AGSTFRNPAGFSSTG. Ser214 acts as the Proton donor in catalysis. Glu296 is a catalytic residue.

Belongs to the MurB family. It depends on FAD as a cofactor.

Its subcellular location is the cytoplasm. It carries out the reaction UDP-N-acetyl-alpha-D-muramate + NADP(+) = UDP-N-acetyl-3-O-(1-carboxyvinyl)-alpha-D-glucosamine + NADPH + H(+). It functions in the pathway cell wall biogenesis; peptidoglycan biosynthesis. Its function is as follows. Cell wall formation. The polypeptide is UDP-N-acetylenolpyruvoylglucosamine reductase (Cereibacter sphaeroides (strain ATCC 17025 / ATH 2.4.3) (Rhodobacter sphaeroides)).